We begin with the raw amino-acid sequence, 145 residues long: uncharacterized protein (145 aa).

Belongs to the methyltransferase superfamily.

Functionally, probable methyltransferase. This is an uncharacterized protein from Schizosaccharomyces pombe (strain 972 / ATCC 24843) (Fission yeast).